We begin with the raw amino-acid sequence, 776 residues long: Protein translocase subunit SecA 2 (776 aa).

Residues glutamine 80, 98-102, and aspartate 486 contribute to the ATP site; that span reads GEGKT.

The protein belongs to the SecA family. Monomer and homodimer. Part of the essential Sec protein translocation apparatus which comprises SecA, SecYEG and auxiliary proteins SecDF. Other proteins may also be involved.

It localises to the cell membrane. It is found in the cytoplasm. The catalysed reaction is ATP + H2O + cellular proteinSide 1 = ADP + phosphate + cellular proteinSide 2.. In terms of biological role, part of the Sec protein translocase complex. Interacts with the SecYEG preprotein conducting channel. Has a central role in coupling the hydrolysis of ATP to the transfer of proteins into and across the cell membrane, serving as an ATP-driven molecular motor driving the stepwise translocation of polypeptide chains across the membrane. This Listeria monocytogenes serotype 1/2a (strain 10403S) protein is Protein translocase subunit SecA 2.